Here is a 480-residue protein sequence, read N- to C-terminus: Pyruvate kinase II (480 aa).

Arg36 is a binding site for substrate. K(+)-binding residues include Asn38, Ser40, and Asp70. Residue 38–41 (NFSH) coordinates ATP. ATP is bound by residues Arg77 and Lys160. Lys223 is a substrate binding site. A Mg(2+)-binding site is contributed by Glu225. Substrate-binding residues include Gly251, Asp252, and Thr284. Residue Asp252 coordinates Mg(2+).

This sequence belongs to the pyruvate kinase family. In terms of assembly, homotetramer. Requires Mg(2+) as cofactor. K(+) is required as a cofactor.

It catalyses the reaction pyruvate + ATP = phosphoenolpyruvate + ADP + H(+). Its pathway is carbohydrate degradation; glycolysis; pyruvate from D-glyceraldehyde 3-phosphate: step 5/5. Its activity is regulated as follows. Allosterically activated by AMP and by several sugar phosphates. Belongs to type II PK. Catalyzes the formation of pyruvate in the last step of glycolysis, it is irreversible under physiological conditions. The reaction is critical for the control of metabolic flux in the second part of glycolysis. The sequence is that of Pyruvate kinase II (pykA) from Salmonella typhimurium (strain LT2 / SGSC1412 / ATCC 700720).